A 443-amino-acid polypeptide reads, in one-letter code: UDP-N-acetylglucosamine 1-carboxyvinyltransferase 1 (443 aa).

Residue 22-23 (KN) participates in phosphoenolpyruvate binding. A UDP-N-acetyl-alpha-D-glucosamine-binding site is contributed by Arg-95. Residue Cys-119 is the Proton donor of the active site. Cys-119 carries the 2-(S-cysteinyl)pyruvic acid O-phosphothioketal modification. UDP-N-acetyl-alpha-D-glucosamine-binding positions include 124-128 (RPIDL), Asp-308, and Val-330.

The protein belongs to the EPSP synthase family. MurA subfamily.

It is found in the cytoplasm. It carries out the reaction phosphoenolpyruvate + UDP-N-acetyl-alpha-D-glucosamine = UDP-N-acetyl-3-O-(1-carboxyvinyl)-alpha-D-glucosamine + phosphate. It participates in cell wall biogenesis; peptidoglycan biosynthesis. Functionally, cell wall formation. Adds enolpyruvyl to UDP-N-acetylglucosamine. This chain is UDP-N-acetylglucosamine 1-carboxyvinyltransferase 1, found in Oceanobacillus iheyensis (strain DSM 14371 / CIP 107618 / JCM 11309 / KCTC 3954 / HTE831).